A 194-amino-acid chain; its full sequence is dITP/XTP pyrophosphatase (194 aa).

11–16 serves as a coordination point for substrate; sequence SHNAGK. Residue D70 is the Proton acceptor of the active site. D70 provides a ligand contact to Mg(2+). Substrate is bound by residues S71, 149-152, K172, and 177-178; these read FGYD and HR.

This sequence belongs to the HAM1 NTPase family. In terms of assembly, homodimer. Requires Mg(2+) as cofactor.

It carries out the reaction XTP + H2O = XMP + diphosphate + H(+). It catalyses the reaction dITP + H2O = dIMP + diphosphate + H(+). The enzyme catalyses ITP + H2O = IMP + diphosphate + H(+). Its function is as follows. Pyrophosphatase that catalyzes the hydrolysis of nucleoside triphosphates to their monophosphate derivatives, with a high preference for the non-canonical purine nucleotides XTP (xanthosine triphosphate), dITP (deoxyinosine triphosphate) and ITP. Seems to function as a house-cleaning enzyme that removes non-canonical purine nucleotides from the nucleotide pool, thus preventing their incorporation into DNA/RNA and avoiding chromosomal lesions. The sequence is that of dITP/XTP pyrophosphatase from Thermosynechococcus vestitus (strain NIES-2133 / IAM M-273 / BP-1).